The following is a 355-amino-acid chain: Heat-inducible transcription repressor HrcA (355 aa).

It belongs to the HrcA family.

Its function is as follows. Negative regulator of class I heat shock genes (grpE-dnaK-dnaJ and groELS operons). Prevents heat-shock induction of these operons. The chain is Heat-inducible transcription repressor HrcA from Nitratidesulfovibrio vulgaris (strain DSM 19637 / Miyazaki F) (Desulfovibrio vulgaris).